The primary structure comprises 393 residues: Tryptophan 2,3-dioxygenase (393 aa).

Substrate-binding positions include 56–60 (FIVTH) and arginine 127. Heme is bound at residue histidine 312. Residue threonine 327 participates in substrate binding.

It belongs to the tryptophan 2,3-dioxygenase family. Homotetramer. Dimer of dimers. Heme is required as a cofactor.

It catalyses the reaction L-tryptophan + O2 = N-formyl-L-kynurenine. The protein operates within amino-acid degradation; L-tryptophan degradation via kynurenine pathway; L-kynurenine from L-tryptophan: step 1/2. It participates in pigment biosynthesis; ommochrome biosynthesis. Stimulated by low concentrations of hydrogen peroxide (5 uM), ascorbate (0.1-0.3 mM), and sodium hydrosulfite (0.1 mM). Inhibited by high concentrations of hydrogen peroxide (0.1 mM), ascorbate (10 mM), and sodium hydrosulfite (1 mM). Functionally, heme-dependent dioxygenase that catalyzes the oxidative cleavage of the L-tryptophan (L-Trp) pyrrole ring and converts L-tryptophan to N-formyl-L-kynurenine. Catalyzes the oxidative cleavage of the indole moiety. The sequence is that of Tryptophan 2,3-dioxygenase from Aedes aegypti (Yellowfever mosquito).